Here is a 770-residue protein sequence, read N- to C-terminus: ATP-dependent RNA helicase mak5 (770 aa).

Over residues 1-10 (MGQKRQRDQK) the composition is skewed to basic and acidic residues. Disordered stretches follow at residues 1-33 (MGQK…ERES) and 78-174 (NGQL…AKDR). The span at 105-118 (TEFDDEWNGFSDED) shows a compositional bias: acidic residues. Composition is skewed to basic and acidic residues over residues 138–154 (NGKK…IKAK) and 162–174 (EQKE…AKDR). Positions 197–225 (SAWEPLGLSPETLTSLSKLKFSTPTSVQK) match the Q motif motif. Positions 228-437 (IPPILDGHDV…AGKGKWTGGD (210 aa)) constitute a Helicase ATP-binding domain. 241–248 (ASTGSGKT) contributes to the ATP binding site. The short motif at 363 to 366 (DEAD) is the DEAD box element. Residues 384–404 (LDRVEDGGPPDEEDDSSEENV) form a disordered region. Residues 391-401 (GPPDEEDDSSE) are compositionally biased toward acidic residues. The Helicase C-terminal domain occupies 489–639 (YLYTLLLYHP…KLPLESLELD (151 aa)). Residues 693 to 713 (KGWGRGRGRGRQERDRQVGST) form a disordered region.

It belongs to the DEAD box helicase family. DDX24/MAK5 subfamily.

It is found in the nucleus. It localises to the nucleolus. The enzyme catalyses ATP + H2O = ADP + phosphate + H(+). In terms of biological role, ATP-binding RNA helicase involved in the biogenesis of 60S ribosomal subunits and is required for the normal formation of 25S and 5.8S rRNAs. The chain is ATP-dependent RNA helicase mak5 (mak5) from Emericella nidulans (strain FGSC A4 / ATCC 38163 / CBS 112.46 / NRRL 194 / M139) (Aspergillus nidulans).